Reading from the N-terminus, the 308-residue chain is Ribosomal RNA large subunit methyltransferase F (308 aa).

It belongs to the methyltransferase superfamily. METTL16/RlmF family.

It is found in the cytoplasm. It catalyses the reaction adenosine(1618) in 23S rRNA + S-adenosyl-L-methionine = N(6)-methyladenosine(1618) in 23S rRNA + S-adenosyl-L-homocysteine + H(+). Its function is as follows. Specifically methylates the adenine in position 1618 of 23S rRNA. The protein is Ribosomal RNA large subunit methyltransferase F of Escherichia coli O127:H6 (strain E2348/69 / EPEC).